The sequence spans 226 residues: Lipoprotein-releasing system ATP-binding protein LolD (226 aa).

Positions 6–226 (VLISGLTKTF…KLYKGNLEEV (221 aa)) constitute an ABC transporter domain. 42-49 (GESGSGKS) contacts ATP.

This sequence belongs to the ABC transporter superfamily. Lipoprotein translocase (TC 3.A.1.125) family. The complex is composed of two ATP-binding proteins (LolD) and two transmembrane proteins (LolC and LolE).

Its subcellular location is the cell inner membrane. Part of the ABC transporter complex LolCDE involved in the translocation of mature outer membrane-directed lipoproteins, from the inner membrane to the periplasmic chaperone, LolA. Responsible for the formation of the LolA-lipoprotein complex in an ATP-dependent manner. This Treponema denticola (strain ATCC 35405 / DSM 14222 / CIP 103919 / JCM 8153 / KCTC 15104) protein is Lipoprotein-releasing system ATP-binding protein LolD.